We begin with the raw amino-acid sequence, 409 residues long: MHALRNFAGNGIANVFGCGIRRRLSYVLGIETSCDDTGIAIVDTTGRVIANVLESQQEFHTRYGGIIPPRAQDLHRARIESAYQRCMEAAQLKPDQLTAIAVTTRPGLPLSLLVGVRFARHLARRLQKPLLPVHHMEAHALQARMEHPEQIGYPFLCLLASGGHCQLVVANGPGRLTLLGQTLDDAPGEAFDKIGRRLRLHILPEYRLWNGGRAIEHAAQLASDPLAYEFPLPLAQQRNCNFSFAGIKNNSFRAIRARERAERTPPDGVISNYGDFCAGLLRSVSRHLMHRTQRAIEYCLLPHRQLFGDTPPTLVMSGGVANNDAIYANIEHLAAQYGCRSFRPSKRYCSDNGVMIAWHGVEQLLQDKEASTRYDYDSIDIQGSAGFAESHEEAVAAAAIKCKWIQPLV.

Residues methionine 1–glutamate 31 constitute a mitochondrion transit peptide. A divalent metal cation-binding residues include histidine 135 and histidine 139. Substrate-binding positions include leucine 159–glycine 163, aspartate 192, glycine 212, glutamate 216, asparagine 322–asparagine 323, and serine 350. Aspartate 351 is an a divalent metal cation binding site.

The protein belongs to the KAE1 / TsaD family. Homodimer. Requires a divalent metal cation as cofactor.

The protein resides in the mitochondrion. It catalyses the reaction L-threonylcarbamoyladenylate + adenosine(37) in tRNA = N(6)-L-threonylcarbamoyladenosine(37) in tRNA + AMP + H(+). Functionally, required for the formation of a threonylcarbamoyl group on adenosine at position 37 (t(6)A37) in mitochondrial tRNAs that read codons beginning with adenine. Probably involved in the transfer of the threonylcarbamoyl moiety of threonylcarbamoyl-AMP (TC-AMP) to the N6 group of A37. Involved in mitochondrial genome maintenance. This chain is Probable tRNA N6-adenosine threonylcarbamoyltransferase, mitochondrial, found in Drosophila melanogaster (Fruit fly).